The chain runs to 505 residues: Maturase K (505 aa).

This sequence belongs to the intron maturase 2 family. MatK subfamily.

It is found in the plastid. The protein resides in the chloroplast. Functionally, usually encoded in the trnK tRNA gene intron. Probably assists in splicing its own and other chloroplast group II introns. The protein is Maturase K of Rosa stellata (Star rose).